The following is a 412-amino-acid chain: Allantoate amidohydrolase (412 aa).

The Zn(2+) site is built by His-84, Asp-95, Glu-130, and His-193. The allantoate site is built by Arg-218, Asn-278, and Arg-291. His-385 is a Zn(2+) binding site.

It belongs to the peptidase M20 family. Homodimer. It depends on Zn(2+) as a cofactor.

The protein localises to the cytoplasm. It carries out the reaction allantoate + H2O + 2 H(+) = (S)-2-ureidoglycine + NH4(+) + CO2. It functions in the pathway nitrogen metabolism; (S)-allantoin degradation. Involved in the anaerobic nitrogen utilization via the assimilation of allantoin. Catalyzes specifically the hydrolysis of allantoate to yield CO2, NH3 and S-ureidoglycine, which is unstable and readily undergoes a second deamination by S-ureidoglycine aminohydrolase AllE to yield S-ureidoglycolate and NH3. The sequence is that of Allantoate amidohydrolase from Bacillus subtilis (strain 168).